Consider the following 420-residue polypeptide: D-tagatose-1,6-bisphosphate aldolase subunit GatZ (420 aa).

This sequence belongs to the GatZ/KbaZ family. GatZ subfamily. In terms of assembly, forms a complex with GatY.

Its pathway is carbohydrate metabolism; D-tagatose 6-phosphate degradation; D-glyceraldehyde 3-phosphate and glycerone phosphate from D-tagatose 6-phosphate: step 2/2. Functionally, component of the tagatose-1,6-bisphosphate aldolase GatYZ that is required for full activity and stability of the Y subunit. Could have a chaperone-like function for the proper and stable folding of GatY. When expressed alone, GatZ does not show any aldolase activity. Is involved in the catabolism of galactitol. In Escherichia coli O6:H1 (strain CFT073 / ATCC 700928 / UPEC), this protein is D-tagatose-1,6-bisphosphate aldolase subunit GatZ.